We begin with the raw amino-acid sequence, 362 residues long: 3-dehydroquinate synthase (362 aa).

NAD(+) is bound by residues 70–75 (DGESYK), 104–108 (GVVGD), 128–129 (TT), lysine 141, and lysine 150. Zn(2+) contacts are provided by glutamate 183, histidine 246, and histidine 263.

This sequence belongs to the sugar phosphate cyclases superfamily. Dehydroquinate synthase family. It depends on Co(2+) as a cofactor. The cofactor is Zn(2+). NAD(+) serves as cofactor.

Its subcellular location is the cytoplasm. The enzyme catalyses 7-phospho-2-dehydro-3-deoxy-D-arabino-heptonate = 3-dehydroquinate + phosphate. It participates in metabolic intermediate biosynthesis; chorismate biosynthesis; chorismate from D-erythrose 4-phosphate and phosphoenolpyruvate: step 2/7. Functionally, catalyzes the conversion of 3-deoxy-D-arabino-heptulosonate 7-phosphate (DAHP) to dehydroquinate (DHQ). In Saccharophagus degradans (strain 2-40 / ATCC 43961 / DSM 17024), this protein is 3-dehydroquinate synthase.